Here is a 360-residue protein sequence, read N- to C-terminus: Peptide chain release factor 1 (360 aa).

Position 235 is an N5-methylglutamine (Q235). Positions 284 to 313 (AKRQQAEASTRRNLLGSGDRSDRNRTYNFP) are disordered.

Belongs to the prokaryotic/mitochondrial release factor family. In terms of processing, methylated by PrmC. Methylation increases the termination efficiency of RF1.

The protein resides in the cytoplasm. Peptide chain release factor 1 directs the termination of translation in response to the peptide chain termination codons UAG and UAA. The chain is Peptide chain release factor 1 from Salmonella agona (strain SL483).